Reading from the N-terminus, the 379-residue chain is MKYVLIQATDNGILRRAECGGAVTALFKYLLDKKLVDGVLALKRGEDVYDGIPTFITNSNELVETAGSLHCAPTNFGKLIAKYLADKKIAVPAKPCDAMAIRELAKLNQINLDNVYMIGLNCGGTISPITAMKMIELFYEVNPLDVVKEEIDKGKFIIELKNGEHKAVKIEELEEKGFGRRKNCQRCEIMIPRMADLACGNWGAEKGWTFVEICSERGRKLVEDAEKDGYIKIKQPSEKAIQVREKIESIMIKLAKKFQKKHLEEEYPSLEKWKKYWNRCIKCYGCRDNCPLCFCVECSLEKDYIEEKGKIPPNPLIFQGIRLSHISQSCINCGQCEDACPMDIPLAYIFHRMQLKIRDTLGYIPGVDNSLPPLFNIER.

2 consecutive 4Fe-4S ferredoxin-type domains span residues 271 to 301 (EKWKKYWNRCIKCYGCRDNCPLCFCVECSLE) and 321 to 351 (IRLSHISQSCINCGQCEDACPMDIPLAYIFH). [4Fe-4S] cluster contacts are provided by Cys-280, Cys-283, Cys-286, Cys-290, Cys-330, Cys-333, Cys-336, and Cys-340.

This sequence belongs to the FrhB family. As to quaternary structure, dimer of an alpha (FdhA) and a beta (FdhB) subunit. The cofactor is [4Fe-4S] cluster. FAD serves as cofactor. It depends on Zn(2+) as a cofactor.

The enzyme catalyses oxidized coenzyme F420-(gamma-L-Glu)(n) + formate + 2 H(+) = reduced coenzyme F420-(gamma-L-Glu)(n) + CO2. Its function is as follows. Catalyzes the oxidation of formate to carbon dioxide, with coenzyme F420 as the electron acceptor. The protein is F420-dependent formate dehydrogenase subunit beta (fdhB) of Methanocaldococcus jannaschii (strain ATCC 43067 / DSM 2661 / JAL-1 / JCM 10045 / NBRC 100440) (Methanococcus jannaschii).